The following is a 185-amino-acid chain: Ribosome-recycling factor (185 aa).

The tract at residues 138 to 159 (KVKKLEKDKEISEDESKKAQEQ) is disordered.

It belongs to the RRF family.

Its subcellular location is the cytoplasm. Its function is as follows. Responsible for the release of ribosomes from messenger RNA at the termination of protein biosynthesis. May increase the efficiency of translation by recycling ribosomes from one round of translation to another. This is Ribosome-recycling factor from Helicobacter acinonychis (strain Sheeba).